We begin with the raw amino-acid sequence, 207 residues long: Putative 3-methyladenine DNA glycosylase (207 aa).

Residues 182-193 show a composition bias toward low complexity; sequence PAPAGARAARAP. Positions 182–207 are disordered; that stretch reads PAPAGARAARAPAPAPRPRRPRGSGP. Residues 198–207 are compositionally biased toward basic residues; sequence RPRRPRGSGP.

Belongs to the DNA glycosylase MPG family.

The chain is Putative 3-methyladenine DNA glycosylase from Anaeromyxobacter dehalogenans (strain 2CP-C).